The primary structure comprises 197 residues: Thymidylate kinase (197 aa).

ATP is bound at residue glycine 7–serine 14.

The protein belongs to the thymidylate kinase family.

The catalysed reaction is dTMP + ATP = dTDP + ADP. In terms of biological role, phosphorylation of dTMP to form dTDP in both de novo and salvage pathways of dTTP synthesis. The polypeptide is Thymidylate kinase (Fervidobacterium nodosum (strain ATCC 35602 / DSM 5306 / Rt17-B1)).